A 234-amino-acid polypeptide reads, in one-letter code: Uridylate kinase (234 aa).

10–11 (GS) provides a ligand contact to ATP. UMP is bound at residue Gly-44. ATP contacts are provided by Gly-45 and Arg-49. Residues Asp-66 and 114–120 (ITPAQTT) each bind UMP. ATP contacts are provided by Thr-140, Tyr-146, and Asp-149.

The protein belongs to the UMP kinase family. Homohexamer.

It is found in the cytoplasm. It carries out the reaction UMP + ATP = UDP + ADP. Its pathway is pyrimidine metabolism; CTP biosynthesis via de novo pathway; UDP from UMP (UMPK route): step 1/1. Its activity is regulated as follows. Inhibited by UTP. In terms of biological role, catalyzes the reversible phosphorylation of UMP to UDP. This Methanoculleus marisnigri (strain ATCC 35101 / DSM 1498 / JR1) protein is Uridylate kinase.